We begin with the raw amino-acid sequence, 290 residues long: 33 kDa chaperonin (290 aa).

2 disulfides stabilise this stretch: C236-C238 and C269-C272.

Belongs to the HSP33 family. In terms of processing, under oxidizing conditions two disulfide bonds are formed involving the reactive cysteines. Under reducing conditions zinc is bound to the reactive cysteines and the protein is inactive.

The protein localises to the cytoplasm. Its function is as follows. Redox regulated molecular chaperone. Protects both thermally unfolding and oxidatively damaged proteins from irreversible aggregation. Plays an important role in the bacterial defense system toward oxidative stress. The polypeptide is 33 kDa chaperonin (Brevibacillus brevis (strain 47 / JCM 6285 / NBRC 100599)).